A 190-amino-acid chain; its full sequence is dCTP deaminase, dUMP-forming (190 aa).

DCTP contacts are provided by residues 101-106, Asp-119, 127-129, Gln-148, Tyr-162, and Gln-174; these read KSSLGR and TLE. The active-site Proton donor/acceptor is the Glu-129. The disordered stretch occupies residues 161 to 190; it reads PYGSSGVGSKYQGQRGPTPSRSYQNFIRST. Polar residues predominate over residues 171-190; that stretch reads YQGQRGPTPSRSYQNFIRST.

The protein belongs to the dCTP deaminase family. In terms of assembly, homotrimer.

It catalyses the reaction dCTP + 2 H2O = dUMP + NH4(+) + diphosphate. The protein operates within pyrimidine metabolism; dUMP biosynthesis; dUMP from dCTP: step 1/1. Its function is as follows. Bifunctional enzyme that catalyzes both the deamination of dCTP to dUTP and the hydrolysis of dUTP to dUMP without releasing the toxic dUTP intermediate. The protein is dCTP deaminase, dUMP-forming of Mycobacterium ulcerans (strain Agy99).